A 154-amino-acid chain; its full sequence is 3-hydroxyacyl-[acyl-carrier-protein] dehydratase FabZ (154 aa).

Histidine 60 is a catalytic residue.

Belongs to the thioester dehydratase family. FabZ subfamily.

The protein localises to the cytoplasm. The enzyme catalyses a (3R)-hydroxyacyl-[ACP] = a (2E)-enoyl-[ACP] + H2O. In terms of biological role, involved in unsaturated fatty acids biosynthesis. Catalyzes the dehydration of short chain beta-hydroxyacyl-ACPs and long chain saturated and unsaturated beta-hydroxyacyl-ACPs. The polypeptide is 3-hydroxyacyl-[acyl-carrier-protein] dehydratase FabZ (Actinobacillus pleuropneumoniae serotype 5b (strain L20)).